A 764-amino-acid chain; its full sequence is Thyrotropin receptor (764 aa).

The N-terminal stretch at 1-21 is a signal peptide; the sequence is MRPGSLLLLVLLLALSRSLRG. The Extracellular segment spans residues 22 to 413; sequence KECASPPCEC…EFNPCEDIMG (392 aa). Cysteines 31 and 41 form a disulfide. Residues N77 and N99 are each glycosylated (N-linked (GlcNAc...) asparagine). LRR repeat units follow at residues 100–124, 125–150, 151–174, 176–199, 200–223, 225–248, and 264–288; these read LSKM…ALTE, LPLL…IYST, DIFF…AFQG, CNET…AFNG, TKLD…AFGG, YSGP…GLEH, and PLSL…AFKN. N-linked (GlcNAc...) asparagine glycosylation is found at N177 and N198. N302 carries N-linked (GlcNAc...) asparagine glycosylation. Y385 carries the sulfotyrosine modification. Residues 414–441 traverse the membrane as a helical segment; sequence YRFLRIVVWFVSLLALLGNIFVLLILLT. Topologically, residues 442 to 450 are cytoplasmic; sequence SHYKLTVPR. The chain crosses the membrane as a helical span at residues 451-473; it reads FLMCNLAFADFCMGVYLLLIASV. The Extracellular segment spans residues 474–494; that stretch reads DLYTHSEYYNHAIDWQTGPGC. A disulfide bridge connects residues C494 and C569. Residues 495 to 517 form a helical membrane-spanning segment; it reads NTAGFFTVFASELSVYTLTVITL. At 518–537 the chain is on the cytoplasmic side; the sequence is ERWYAITFAMRLDRKIRLRH. A helical membrane pass occupies residues 538–560; it reads AYTIMAGGWVSCFLLALLPMVGI. At 561-580 the chain is on the extracellular side; sequence SSYAKVSICLPMDTDTPLAL. The chain crosses the membrane as a helical span at residues 581 to 602; sequence AYIVLVLLLNVVAFVVVCSCYV. The Cytoplasmic portion of the chain corresponds to 603-625; sequence KIYITVRNPQYNPRDKDTKIAKR. Residues 626–649 traverse the membrane as a helical segment; the sequence is MAVLIFTDFMCMAPISFYALSALM. At 650–660 the chain is on the extracellular side; sequence NKPLITVTNSK. A helical transmembrane segment spans residues 661–682; the sequence is ILLVLFYPLNSCANPFLYAIFT. Topologically, residues 683–764 are cytoplasmic; it reads KAFQRDVFIL…ISEEYKQTAL (82 aa). Positions 762 to 764 match the PDZ-binding motif; that stretch reads TAL.

It belongs to the G-protein coupled receptor 1 family. FSH/LSH/TSH subfamily. Interacts with heterodimer GPHA2:GPHB5; this interaction stimulates cAMP production. Interacts (via the PDZ-binding motif) with SCRIB; regulates TSHR trafficking and function. Glycosylated. In terms of processing, sulfated. Sulfation on Tyr-385 plays a role in thyrotropin receptor binding and activation.

Its subcellular location is the cell membrane. The protein resides in the basolateral cell membrane. Its function is as follows. Receptor for the thyroid-stimulating hormone (TSH) or thyrotropin. Also acts as a receptor for the heterodimeric glycoprotein hormone (GPHA2:GPHB5) or thyrostimulin. The activity of this receptor is mediated by G proteins which activate adenylate cyclase. Plays a central role in controlling thyroid cell metabolism. In Mus musculus (Mouse), this protein is Thyrotropin receptor (Tshr).